The following is a 153-amino-acid chain: Riboflavin synthase (153 aa).

The protein belongs to the DMRL synthase family. In terms of assembly, homooligomer. Requires Mg(2+) as cofactor.

The catalysed reaction is 2 6,7-dimethyl-8-(1-D-ribityl)lumazine + H(+) = 5-amino-6-(D-ribitylamino)uracil + riboflavin. It participates in cofactor biosynthesis; riboflavin biosynthesis; riboflavin from 2-hydroxy-3-oxobutyl phosphate and 5-amino-6-(D-ribitylamino)uracil: step 2/2. Its activity is regulated as follows. Inhibited by EDTA. Functionally, the relatively low activity of this enzyme suggested that 6,7-dimethyl-8-ribityllumazine might not be its natural substrate. This is Riboflavin synthase (ribC) from Methanothermobacter marburgensis (strain ATCC BAA-927 / DSM 2133 / JCM 14651 / NBRC 100331 / OCM 82 / Marburg) (Methanobacterium thermoautotrophicum).